The following is a 157-amino-acid chain: Endoribonuclease YbeY (157 aa).

Positions 113, 117, and 123 each coordinate Zn(2+).

Belongs to the endoribonuclease YbeY family. The cofactor is Zn(2+).

The protein localises to the cytoplasm. Its function is as follows. Single strand-specific metallo-endoribonuclease involved in late-stage 70S ribosome quality control and in maturation of the 3' terminus of the 16S rRNA. The polypeptide is Endoribonuclease YbeY (Ehrlichia ruminantium (strain Gardel)).